We begin with the raw amino-acid sequence, 156 residues long: MSRRSTAEKETAKSDPIYRNRLVNMLVNRILRHGKKSLAYRILYRAMKNIQQKTEKNPLSVLRQAIRGVTPNVTVKARRVGGSTYQVPVEIRSTQGKALAIRWLLGASRKRPPGRNMAFKLSYELMDAARGNGNAIRKKEETHRMAEANRAFAHFR.

Belongs to the universal ribosomal protein uS7 family. Part of the 30S ribosomal subunit.

It is found in the plastid. Its subcellular location is the chloroplast. Functionally, one of the primary rRNA binding proteins, it binds directly to 16S rRNA where it nucleates assembly of the head domain of the 30S subunit. This chain is Small ribosomal subunit protein uS7c (rps7), found in Cycas revoluta (Sago palm).